A 177-amino-acid polypeptide reads, in one-letter code: B-phycoerythrin beta chain (177 aa).

Residues cysteine 50 and cysteine 61 each contribute to the (2R,3E)-phycoerythrobilin site. N4-methylasparagine is present on asparagine 72. 2 residues coordinate (2R,3E)-phycoerythrobilin: cysteine 82 and cysteine 158.

It belongs to the phycobiliprotein family. In terms of assembly, heterotetramer of one alpha-1, one alpha-2, and two beta chains. In terms of processing, contains three covalently linked bilin chromophores.

It is found in the plastid. Its subcellular location is the chloroplast thylakoid membrane. Its function is as follows. Light-harvesting photosynthetic bile pigment-protein from the phycobiliprotein complex. The polypeptide is B-phycoerythrin beta chain (cpeB) (Guillardia theta (Cryptophyte)).